The chain runs to 273 residues: Large ribosomal subunit protein uL2cz/uL2cy (273 aa).

Disordered stretches follow at residues Met-1–Ser-24 and Asn-224–Gly-254.

This sequence belongs to the universal ribosomal protein uL2 family. In terms of assembly, part of the 50S ribosomal subunit.

Its subcellular location is the plastid. The protein localises to the chloroplast. This chain is Large ribosomal subunit protein uL2cz/uL2cy (rpl2-A), found in Nymphaea alba (White water-lily).